A 137-amino-acid chain; its full sequence is Small ribosomal subunit protein bS6 (137 aa).

This sequence belongs to the bacterial ribosomal protein bS6 family.

In terms of biological role, binds together with bS18 to 16S ribosomal RNA. This is Small ribosomal subunit protein bS6 from Mycoplasma mycoides subsp. mycoides SC (strain CCUG 32753 / NCTC 10114 / PG1).